The primary structure comprises 56 residues: Hemolymph trypsin inhibitor A (56 aa).

The BPTI/Kunitz inhibitor domain maps to 22–56 (CFLPLEVGVCRALFFRYGYDPAIKACXEFMYGGCQ). Cysteines 31 and 55 form a disulfide.

Its function is as follows. Inhibits trypsin. This is Hemolymph trypsin inhibitor A from Manduca sexta (Tobacco hawkmoth).